We begin with the raw amino-acid sequence, 272 residues long: Phosphoribosylformylglycinamidine synthase subunit PurQ (272 aa).

The Glutamine amidotransferase type-1 domain maps to 8-243; the sequence is VLVMSGYGIN…SEPEYQLKKE (236 aa). C98 serves as the catalytic Nucleophile. Residues H225, E227, and E235 contribute to the active site.

In terms of assembly, part of the FGAM synthase complex composed of 1 PurL, 1 PurQ and 2 PurS subunits.

Its subcellular location is the cytoplasm. The catalysed reaction is N(2)-formyl-N(1)-(5-phospho-beta-D-ribosyl)glycinamide + L-glutamine + ATP + H2O = 2-formamido-N(1)-(5-O-phospho-beta-D-ribosyl)acetamidine + L-glutamate + ADP + phosphate + H(+). The enzyme catalyses L-glutamine + H2O = L-glutamate + NH4(+). The protein operates within purine metabolism; IMP biosynthesis via de novo pathway; 5-amino-1-(5-phospho-D-ribosyl)imidazole from N(2)-formyl-N(1)-(5-phospho-D-ribosyl)glycinamide: step 1/2. Its function is as follows. Part of the phosphoribosylformylglycinamidine synthase complex involved in the purines biosynthetic pathway. Catalyzes the ATP-dependent conversion of formylglycinamide ribonucleotide (FGAR) and glutamine to yield formylglycinamidine ribonucleotide (FGAM) and glutamate. The FGAM synthase complex is composed of three subunits. PurQ produces an ammonia molecule by converting glutamine to glutamate. PurL transfers the ammonia molecule to FGAR to form FGAM in an ATP-dependent manner. PurS interacts with PurQ and PurL and is thought to assist in the transfer of the ammonia molecule from PurQ to PurL. This chain is Phosphoribosylformylglycinamidine synthase subunit PurQ, found in Methanococcus maripaludis (strain C7 / ATCC BAA-1331).